The following is a 131-amino-acid chain: Small ribosomal subunit protein uS9 (131 aa).

It belongs to the universal ribosomal protein uS9 family.

In Mycoplasmopsis synoviae (strain 53) (Mycoplasma synoviae), this protein is Small ribosomal subunit protein uS9.